Reading from the N-terminus, the 266-residue chain is Shikimate dehydrogenase (NADP(+)) (266 aa).

Shikimate is bound by residues S16–S18 and T65. Residue K69 is the Proton acceptor of the active site. The shikimate site is built by N90 and D105. Residues G128–S132 and L211 each bind NADP(+). Y213 provides a ligand contact to shikimate. Position 233 (G233) interacts with NADP(+).

It belongs to the shikimate dehydrogenase family. Homodimer.

It catalyses the reaction shikimate + NADP(+) = 3-dehydroshikimate + NADPH + H(+). The protein operates within metabolic intermediate biosynthesis; chorismate biosynthesis; chorismate from D-erythrose 4-phosphate and phosphoenolpyruvate: step 4/7. Its function is as follows. Involved in the biosynthesis of the chorismate, which leads to the biosynthesis of aromatic amino acids. Catalyzes the reversible NADPH linked reduction of 3-dehydroshikimate (DHSA) to yield shikimate (SA). The protein is Shikimate dehydrogenase (NADP(+)) of Helicobacter pylori (strain J99 / ATCC 700824) (Campylobacter pylori J99).